The sequence spans 386 residues: Aspartate carbamoyltransferase 1, chloroplastic (386 aa).

Residues 1 to 39 (MTVASMLSSNSMNVGVSNPKMSSKTSACCLLNRPWPSSC) constitute a chloroplast transit peptide. Carbamoyl phosphate-binding residues include R132 and T133. Residues R132 and T133 each coordinate UMP. K162 is an L-aspartate binding site. Carbamoyl phosphate-binding residues include R183, H211, and Q214. Residues R183 and H211 each coordinate UMP. UMP-binding residues include R244 and R306. L-aspartate-binding residues include R244 and R306. Positions 346 and 347 each coordinate carbamoyl phosphate.

This sequence belongs to the aspartate/ornithine carbamoyltransferase superfamily. ATCase family. In terms of assembly, homotrimer.

It is found in the plastid. The protein resides in the chloroplast. It catalyses the reaction carbamoyl phosphate + L-aspartate = N-carbamoyl-L-aspartate + phosphate + H(+). It functions in the pathway pyrimidine metabolism; UMP biosynthesis via de novo pathway; (S)-dihydroorotate from bicarbonate: step 2/3. With respect to regulation, feedback inhibited by UMP. Functionally, catalyzes the condensation of carbamoyl phosphate and aspartate to form carbamoyl aspartate and inorganic phosphate, the committed step in the de novo pyrimidine nucleotide biosynthesis pathway. This Pisum sativum (Garden pea) protein is Aspartate carbamoyltransferase 1, chloroplastic (PYRB1).